The following is a 431-amino-acid chain: Glutamate-1-semialdehyde 2,1-aminomutase (431 aa).

Residue Lys269 is modified to N6-(pyridoxal phosphate)lysine.

The protein belongs to the class-III pyridoxal-phosphate-dependent aminotransferase family. HemL subfamily. As to quaternary structure, homodimer. Pyridoxal 5'-phosphate is required as a cofactor.

The protein resides in the cytoplasm. The enzyme catalyses (S)-4-amino-5-oxopentanoate = 5-aminolevulinate. It participates in porphyrin-containing compound metabolism; protoporphyrin-IX biosynthesis; 5-aminolevulinate from L-glutamyl-tRNA(Glu): step 2/2. It functions in the pathway porphyrin-containing compound metabolism; chlorophyll biosynthesis. The sequence is that of Glutamate-1-semialdehyde 2,1-aminomutase from Prosthecochloris aestuarii (strain DSM 271 / SK 413).